Here is a 147-residue protein sequence, read N- to C-terminus: Deoxyuridine 5'-triphosphate nucleotidohydrolase (147 aa).

Arg24 is a Mg(2+) binding site. Residues 68–70 (PRS), 82–85 (GVID), Tyr88, Gly93, Ile95, and Arg111 each bind dUTP.

This sequence belongs to the dUTPase family. Mg(2+) serves as cofactor.

The enzyme catalyses dUTP + H2O = dUMP + diphosphate + H(+). Its function is as follows. This enzyme is involved in nucleotide metabolism: it produces dUMP, the immediate precursor of thymidine nucleotides and it decreases the intracellular concentration of dUTP so that uracil cannot be incorporated into DNA. The protein is Deoxyuridine 5'-triphosphate nucleotidohydrolase (OPG046) of Oryctolagus cuniculus (Rabbit).